The sequence spans 477 residues: UDP-N-acetylmuramate--L-alanine ligase (477 aa).

122-128 is a binding site for ATP; the sequence is GTHGKTT.

It belongs to the MurCDEF family.

It localises to the cytoplasm. The catalysed reaction is UDP-N-acetyl-alpha-D-muramate + L-alanine + ATP = UDP-N-acetyl-alpha-D-muramoyl-L-alanine + ADP + phosphate + H(+). Its pathway is cell wall biogenesis; peptidoglycan biosynthesis. Functionally, cell wall formation. The chain is UDP-N-acetylmuramate--L-alanine ligase from Xanthomonas campestris pv. campestris (strain 8004).